A 155-amino-acid polypeptide reads, in one-letter code: Large ribosomal subunit protein uL13 (155 aa).

The protein belongs to the universal ribosomal protein uL13 family. As to quaternary structure, part of the 50S ribosomal subunit.

In terms of biological role, this protein is one of the early assembly proteins of the 50S ribosomal subunit, although it is not seen to bind rRNA by itself. It is important during the early stages of 50S assembly. In Rickettsia felis (strain ATCC VR-1525 / URRWXCal2) (Rickettsia azadi), this protein is Large ribosomal subunit protein uL13.